Here is a 102-residue protein sequence, read N- to C-terminus: NADH-quinone oxidoreductase subunit K (102 aa).

3 helical membrane-spanning segments follow: residues Leu5–Val25, Ile30–Ala50, and Ile62–Leu82.

It belongs to the complex I subunit 4L family. In terms of assembly, NDH-1 is composed of 14 different subunits. Subunits NuoA, H, J, K, L, M, N constitute the membrane sector of the complex.

Its subcellular location is the cell inner membrane. It carries out the reaction a quinone + NADH + 5 H(+)(in) = a quinol + NAD(+) + 4 H(+)(out). NDH-1 shuttles electrons from NADH, via FMN and iron-sulfur (Fe-S) centers, to quinones in the respiratory chain. The immediate electron acceptor for the enzyme in this species is believed to be ubiquinone. Couples the redox reaction to proton translocation (for every two electrons transferred, four hydrogen ions are translocated across the cytoplasmic membrane), and thus conserves the redox energy in a proton gradient. This chain is NADH-quinone oxidoreductase subunit K, found in Phenylobacterium zucineum (strain HLK1).